Consider the following 583-residue polypeptide: Arginine--tRNA ligase (583 aa).

The short motif at 123–133 (PNIAKEMHVGH) is the 'HIGH' region element.

This sequence belongs to the class-I aminoacyl-tRNA synthetase family. Monomer.

Its subcellular location is the cytoplasm. It catalyses the reaction tRNA(Arg) + L-arginine + ATP = L-arginyl-tRNA(Arg) + AMP + diphosphate. This chain is Arginine--tRNA ligase, found in Blochmanniella floridana.